Reading from the N-terminus, the 329-residue chain is Phosphate acyltransferase (329 aa).

Belongs to the PlsX family. Homodimer. Probably interacts with PlsY.

It is found in the cytoplasm. The enzyme catalyses a fatty acyl-[ACP] + phosphate = an acyl phosphate + holo-[ACP]. The protein operates within lipid metabolism; phospholipid metabolism. Catalyzes the reversible formation of acyl-phosphate (acyl-PO(4)) from acyl-[acyl-carrier-protein] (acyl-ACP). This enzyme utilizes acyl-ACP as fatty acyl donor, but not acyl-CoA. The chain is Phosphate acyltransferase from Anoxybacillus flavithermus (strain DSM 21510 / WK1).